The primary structure comprises 267 residues: Taurine import ATP-binding protein TauB (267 aa).

The ABC transporter domain maps to 6 to 238; the sequence is FNEASLIYPA…DILAGAPASE (233 aa). 43-50 is a binding site for ATP; the sequence is GRSGSGKT.

Belongs to the ABC transporter superfamily. Taurine importer (TC 3.A.1.17.1) family. The complex is composed of two ATP-binding proteins (TauB), two transmembrane proteins (TauC) and a solute-binding protein (TauA).

The protein resides in the cell inner membrane. It catalyses the reaction taurine(out) + ATP + H2O = taurine(in) + ADP + phosphate + H(+). Its function is as follows. Part of the ABC transporter complex TauABC involved in taurine import. Responsible for energy coupling to the transport system. In Sinorhizobium fredii (strain NBRC 101917 / NGR234), this protein is Taurine import ATP-binding protein TauB.